The sequence spans 116 residues: Ribosome-binding factor A (116 aa).

It belongs to the RbfA family. As to quaternary structure, monomer. Binds 30S ribosomal subunits, but not 50S ribosomal subunits or 70S ribosomes.

The protein resides in the cytoplasm. Functionally, one of several proteins that assist in the late maturation steps of the functional core of the 30S ribosomal subunit. Associates with free 30S ribosomal subunits (but not with 30S subunits that are part of 70S ribosomes or polysomes). Required for efficient processing of 16S rRNA. May interact with the 5'-terminal helix region of 16S rRNA. The sequence is that of Ribosome-binding factor A from Clostridium botulinum (strain Alaska E43 / Type E3).